The following is a 500-amino-acid chain: Probable cytosol aminopeptidase (500 aa).

Mn(2+)-binding residues include lysine 268 and aspartate 273. Residue lysine 280 is part of the active site. Mn(2+) is bound by residues aspartate 291, aspartate 350, and glutamate 352. Residue arginine 354 is part of the active site.

It belongs to the peptidase M17 family. The cofactor is Mn(2+).

The protein localises to the cytoplasm. It carries out the reaction Release of an N-terminal amino acid, Xaa-|-Yaa-, in which Xaa is preferably Leu, but may be other amino acids including Pro although not Arg or Lys, and Yaa may be Pro. Amino acid amides and methyl esters are also readily hydrolyzed, but rates on arylamides are exceedingly low.. The catalysed reaction is Release of an N-terminal amino acid, preferentially leucine, but not glutamic or aspartic acids.. Presumably involved in the processing and regular turnover of intracellular proteins. Catalyzes the removal of unsubstituted N-terminal amino acids from various peptides. In Azoarcus sp. (strain BH72), this protein is Probable cytosol aminopeptidase.